A 129-amino-acid chain; its full sequence is Putative zinc finger protein 702 (129 aa).

3 consecutive C2H2-type zinc fingers follow at residues 34-56 (YKCD…HRCH), 62-84 (YKCN…KAIH), and 90-112 (HKCN…HRLH).

The protein belongs to the krueppel C2H2-type zinc-finger protein family.

Its subcellular location is the nucleus. In terms of biological role, may be involved in transcriptional regulation. The sequence is that of Putative zinc finger protein 702 (ZNF702P) from Homo sapiens (Human).